Here is a 389-residue protein sequence, read N- to C-terminus: DNA damage checkpoint control protein RAD17 (389 aa).

The disordered stretch occupies residues 358-389 (LAPPSAFPAEETQDPDESYHPAPSNTDIPLFL). Residues 380 to 389 (PSNTDIPLFL) are compositionally biased toward polar residues.

The protein belongs to the rad1 family. Component of the checkpoint clamp complex composed of DDC1, MEC3 and RAD17.

The protein localises to the nucleus. Its function is as follows. Component of the checkpoint clamp complex involved in the surveillance mechanism that allows the DNA repair pathways to act to restore the integrity of the DNA prior to DNA synthesis or separation of the replicated chromosomes. This Eremothecium gossypii (strain ATCC 10895 / CBS 109.51 / FGSC 9923 / NRRL Y-1056) (Yeast) protein is DNA damage checkpoint control protein RAD17 (RAD17).